Here is a 276-residue protein sequence, read N- to C-terminus: NAD kinase (276 aa).

The Proton acceptor role is filled by aspartate 68. NAD(+) contacts are provided by residues 68 to 69 (DG), arginine 73, 138 to 139 (NE), lysine 149, aspartate 168, 179 to 184 (TAYSLS), and glutamine 237.

Belongs to the NAD kinase family. The cofactor is a divalent metal cation.

The protein localises to the cytoplasm. The enzyme catalyses NAD(+) + ATP = ADP + NADP(+) + H(+). Its function is as follows. Involved in the regulation of the intracellular balance of NAD and NADP, and is a key enzyme in the biosynthesis of NADP. Catalyzes specifically the phosphorylation on 2'-hydroxyl of the adenosine moiety of NAD to yield NADP. The protein is NAD kinase of Methanopyrus kandleri (strain AV19 / DSM 6324 / JCM 9639 / NBRC 100938).